Consider the following 589-residue polypeptide: Actin-histidine N-methyltransferase (589 aa).

Residues 1–22 (MGKKSRVKTQKSGTGATATVSP) are disordered. The span at 10–20 (QKSGTGATATV) shows a compositional bias: polar residues. S-adenosyl-L-methionine-binding positions include Arg-75, 104 to 106 (EGF), Arg-254, 275 to 279 (DMCNH), and 325 to 327 (SGF). Residues 94 to 314 (EGFEMVNFKE…AGEQIYIFYG (221 aa)) enclose the SET domain. Phosphoserine is present on Ser-513. The interval 547–589 (LVNGERSFPNGTRSEEDLKQEERKRAKGDAKESSSDSTDAVKE) is disordered. The span at 559 to 589 (RSEEDLKQEERKRAKGDAKESSSDSTDAVKE) shows a compositional bias: basic and acidic residues.

It belongs to the class V-like SAM-binding methyltransferase superfamily. SETD3 actin-histidine methyltransferase family. In terms of assembly, interacts with MYOD1. Phosphorylated by GSK3B, which is required for recognition by the SCF(FBXW7) complex and subsequent degradation. In terms of processing, ubiquitinated by the SCF(FBXW7) complex following phosphorylation by GSK3B, leading to its degradation by the proteasome.

The protein resides in the cytoplasm. It is found in the nucleus. The catalysed reaction is L-histidyl-[protein] + S-adenosyl-L-methionine = N(tele)-methyl-L-histidyl-[protein] + S-adenosyl-L-homocysteine + H(+). Functionally, protein-histidine N-methyltransferase that specifically mediates 3-methylhistidine (tele-methylhistidine) methylation of actin at 'His-73'. Histidine methylation of actin is required for smooth muscle contraction of the laboring uterus during delivery. Does not have protein-lysine N-methyltransferase activity and probably only catalyzes histidine methylation of actin. The polypeptide is Actin-histidine N-methyltransferase (Dasypus novemcinctus (Nine-banded armadillo)).